The chain runs to 177 residues: Early nodulin-like protein 6 (177 aa).

Residues Met1–Cys23 form the signal peptide. Residues Thr24–Glu127 form the Phytocyanin domain. Asn41 carries N-linked (GlcNAc...) asparagine glycosylation. The cysteines at positions 81 and 115 are disulfide-linked. A lipid anchor (GPI-anchor amidated asparagine) is attached at Asn149. The propeptide at His150 to Val177 is removed in mature form.

The protein belongs to the early nodulin-like (ENODL) family. As to expression, confined to flowers.

Its subcellular location is the cell membrane. Its function is as follows. May act as a carbohydrate transporter. This Arabidopsis thaliana (Mouse-ear cress) protein is Early nodulin-like protein 6.